Consider the following 457-residue polypeptide: Bifunctional protein GlmU (457 aa).

The interval 1-230 (MSKRYAVVLA…FEESLGVNDR (230 aa)) is pyrophosphorylase. UDP-N-acetyl-alpha-D-glucosamine is bound by residues 9 to 12 (LAAG), K23, Q73, and 78 to 79 (GT). Residue D103 coordinates Mg(2+). The UDP-N-acetyl-alpha-D-glucosamine site is built by G140, E155, N170, and N228. N228 contributes to the Mg(2+) binding site. Residues 231–251 (IALAEASRLMQRRINENHMRN) form a linker region. Residues 252 to 457 (GVTLVNPENT…GYAKHLNHGK (206 aa)) are N-acetyltransferase. Residues R333 and K351 each contribute to the UDP-N-acetyl-alpha-D-glucosamine site. H363 acts as the Proton acceptor in catalysis. UDP-N-acetyl-alpha-D-glucosamine-binding residues include Y366 and N377. Acetyl-CoA-binding positions include 386–387 (NY), A423, and R440.

It in the N-terminal section; belongs to the N-acetylglucosamine-1-phosphate uridyltransferase family. This sequence in the C-terminal section; belongs to the transferase hexapeptide repeat family. As to quaternary structure, homotrimer. The cofactor is Mg(2+).

It is found in the cytoplasm. The enzyme catalyses alpha-D-glucosamine 1-phosphate + acetyl-CoA = N-acetyl-alpha-D-glucosamine 1-phosphate + CoA + H(+). It catalyses the reaction N-acetyl-alpha-D-glucosamine 1-phosphate + UTP + H(+) = UDP-N-acetyl-alpha-D-glucosamine + diphosphate. The protein operates within nucleotide-sugar biosynthesis; UDP-N-acetyl-alpha-D-glucosamine biosynthesis; N-acetyl-alpha-D-glucosamine 1-phosphate from alpha-D-glucosamine 6-phosphate (route II): step 2/2. Its pathway is nucleotide-sugar biosynthesis; UDP-N-acetyl-alpha-D-glucosamine biosynthesis; UDP-N-acetyl-alpha-D-glucosamine from N-acetyl-alpha-D-glucosamine 1-phosphate: step 1/1. It participates in bacterial outer membrane biogenesis; LPS lipid A biosynthesis. Its function is as follows. Catalyzes the last two sequential reactions in the de novo biosynthetic pathway for UDP-N-acetylglucosamine (UDP-GlcNAc). The C-terminal domain catalyzes the transfer of acetyl group from acetyl coenzyme A to glucosamine-1-phosphate (GlcN-1-P) to produce N-acetylglucosamine-1-phosphate (GlcNAc-1-P), which is converted into UDP-GlcNAc by the transfer of uridine 5-monophosphate (from uridine 5-triphosphate), a reaction catalyzed by the N-terminal domain. The chain is Bifunctional protein GlmU from Listeria monocytogenes serotype 4b (strain CLIP80459).